The following is a 600-amino-acid chain: Elongation factor 4 (600 aa).

The 183-residue stretch at 5–187 (KYIRNFSIIA…AIVNKLPPPK (183 aa)) folds into the tr-type G domain. GTP-binding positions include 17-22 (DHGKST) and 134-137 (NKLD).

Belongs to the TRAFAC class translation factor GTPase superfamily. Classic translation factor GTPase family. LepA subfamily.

The protein localises to the cell inner membrane. The enzyme catalyses GTP + H2O = GDP + phosphate + H(+). Its function is as follows. Required for accurate and efficient protein synthesis under certain stress conditions. May act as a fidelity factor of the translation reaction, by catalyzing a one-codon backward translocation of tRNAs on improperly translocated ribosomes. Back-translocation proceeds from a post-translocation (POST) complex to a pre-translocation (PRE) complex, thus giving elongation factor G a second chance to translocate the tRNAs correctly. Binds to ribosomes in a GTP-dependent manner. In Rickettsia conorii (strain ATCC VR-613 / Malish 7), this protein is Elongation factor 4.